We begin with the raw amino-acid sequence, 43 residues long: Histone H3 (43 aa).

In terms of assembly, the nucleosome is a histone octamer containing two molecules each of H2A, H2B, H3 and H4 assembled in one H3-H4 heterotetramer and two H2A-H2B heterodimers. The octamer wraps approximately 147 bp of DNA.

The protein resides in the nucleus. The protein localises to the chromosome. Core component of nucleosome. Nucleosomes wrap and compact DNA into chromatin, limiting DNA accessibility to the cellular machineries which require DNA as a template. Histones thereby play a central role in transcription regulation, DNA repair, DNA replication and chromosomal stability. DNA accessibility is regulated via a complex set of post-translational modifications of histones, also called histone code, and nucleosome remodeling. The sequence is that of Histone H3 from Penaeus vannamei (Whiteleg shrimp).